A 335-amino-acid polypeptide reads, in one-letter code: Anthranilate phosphoribosyltransferase (335 aa).

5-phospho-alpha-D-ribose 1-diphosphate-binding positions include Gly-79, 82–83 (GD), Ser-87, 89–92 (NIST), 107–115 (KHGNRSITS), and Ser-119. Gly-79 lines the anthranilate pocket. Ser-91 contributes to the Mg(2+) binding site. Asn-110 lines the anthranilate pocket. Arg-165 provides a ligand contact to anthranilate. Residues Asp-224 and Glu-225 each coordinate Mg(2+).

The protein belongs to the anthranilate phosphoribosyltransferase family. As to quaternary structure, homodimer. It depends on Mg(2+) as a cofactor.

The enzyme catalyses N-(5-phospho-beta-D-ribosyl)anthranilate + diphosphate = 5-phospho-alpha-D-ribose 1-diphosphate + anthranilate. The protein operates within amino-acid biosynthesis; L-tryptophan biosynthesis; L-tryptophan from chorismate: step 2/5. Catalyzes the transfer of the phosphoribosyl group of 5-phosphorylribose-1-pyrophosphate (PRPP) to anthranilate to yield N-(5'-phosphoribosyl)-anthranilate (PRA). This chain is Anthranilate phosphoribosyltransferase, found in Lactococcus lactis subsp. lactis (strain IL1403) (Streptococcus lactis).